A 443-amino-acid polypeptide reads, in one-letter code: Probable glutamate dehydrogenase (443 aa).

The active site involves K86.

The protein belongs to the Glu/Leu/Phe/Val dehydrogenases family.

The enzyme catalyses L-glutamate + NAD(+) + H2O = 2-oxoglutarate + NH4(+) + NADH + H(+). The catalysed reaction is L-glutamate + NADP(+) + H2O = 2-oxoglutarate + NH4(+) + NADPH + H(+). This is Probable glutamate dehydrogenase from Sinorhizobium fredii (strain NBRC 101917 / NGR234).